The following is a 110-amino-acid chain: MALWLQAFTLLVLLVLSSPGAQSASSQHLCGSHLVDALYMVCGEKGFFYQPKTKRDVDPLLGFLSPKSAQENEADEYPYKDQGDLKVKRGIVEQCCHHPCNIFDLQNYCN.

A signal peptide spans 1-23; it reads MALWLQAFTLLVLLVLSSPGAQS. Cystine bridges form between C30-C96, C42-C109, and C95-C100. Positions 56-87 are cleaved as a propeptide — c peptide; the sequence is DVDPLLGFLSPKSAQENEADEYPYKDQGDLKV.

The protein belongs to the insulin family. In terms of assembly, heterodimer of a B chain and an A chain linked by two disulfide bonds.

Its subcellular location is the secreted. Its function is as follows. Insulin decreases blood glucose concentration. It increases cell permeability to monosaccharides, amino acids and fatty acids. It accelerates glycolysis, the pentose phosphate cycle, and glycogen synthesis in liver. The sequence is that of Insulin (ins) from Pantodon buchholzi (Freshwater butterflyfish).